We begin with the raw amino-acid sequence, 196 residues long: MPVLSDDAVLVVGLGNPGPNYAKTRHNLGFMVADLLAAKDGATFKPHKKSGAEATTIRLGGRAVNLAKPRTFMNTSGPQVAALAKFFSVPPANVIVMHDELDLDFGTVRLKLGGGEGGHNGLRSVSQSLGTKDYLRVRLGVGRPPGRKDPAAFVLENFAKAETDQVPLLCEQGADAAELLIRLGLEAAQNQVHAWG.

Residue Y21 participates in tRNA binding. H26 functions as the Proton acceptor in the catalytic mechanism. Residues F72, N74, and N120 each coordinate tRNA.

This sequence belongs to the PTH family. Monomer.

It is found in the cytoplasm. It carries out the reaction an N-acyl-L-alpha-aminoacyl-tRNA + H2O = an N-acyl-L-amino acid + a tRNA + H(+). Hydrolyzes ribosome-free peptidyl-tRNAs (with 1 or more amino acids incorporated), which drop off the ribosome during protein synthesis, or as a result of ribosome stalling. Its function is as follows. Catalyzes the release of premature peptidyl moieties from peptidyl-tRNA molecules trapped in stalled 50S ribosomal subunits, and thus maintains levels of free tRNAs and 50S ribosomes. The protein is Peptidyl-tRNA hydrolase of Mycobacteroides abscessus (strain ATCC 19977 / DSM 44196 / CCUG 20993 / CIP 104536 / JCM 13569 / NCTC 13031 / TMC 1543 / L948) (Mycobacterium abscessus).